The primary structure comprises 413 residues: Phosphatidylcholine:ceramide cholinephosphotransferase 1 (413 aa).

An SAM domain is found at 7-70; sequence WSPKKVADWL…LDMIETLKME (64 aa). Position 8 is a phosphoserine (S8). 5 helical membrane passes run 136–156, 184–204, 215–235, 276–296, and 304–324; these read FLAFLYALSCFVLTTVMISVV, FSICEINGMILVGLWLIQWLL, FFCIVGTLYLYRCITMYVTTL, MCGDYLYSGHTVMLTLTYLFI, and LWWYHWICWLLSVVGIFCILL. H285 is a catalytic residue. The Cytoplasmic portion of the chain corresponds to 325–413; it reads AHDHYTVDVV…VKYSRLVNDT (89 aa). Active-site residues include H328 and D332.

This sequence belongs to the sphingomyelin synthase family. As to expression, brain, heart, kidney, liver, muscle and stomach.

Its subcellular location is the golgi apparatus membrane. The catalysed reaction is an N-acylsphing-4-enine + a 1,2-diacyl-sn-glycero-3-phosphocholine = a sphingomyelin + a 1,2-diacyl-sn-glycerol. It carries out the reaction an N-acylsphinganine + a 1,2-diacyl-sn-glycero-3-phosphocholine = an N-acylsphinganine-1-phosphocholine + a 1,2-diacyl-sn-glycerol. The enzyme catalyses an N-acyl-(4R)-4-hydroxysphinganine + a 1,2-diacyl-sn-glycero-3-phosphocholine = an N-acyl-(4R)-4-hydroxysphinganine-phosphocholine + a 1,2-diacyl-sn-glycerol. It catalyses the reaction 1-(9Z-octadecenoyl)-2-acyl-sn-3-glycerol + a sphingomyelin = a 1-(9Z-octadecenoyl)-2-acyl-sn-glycero-3-phosphocholine + an N-acylsphing-4-enine. The catalysed reaction is N-hexadecanoylsphinganine + a 1,2-diacyl-sn-glycero-3-phosphocholine = N-hexadecanoyl-sphinganine-1-phosphocholine + a 1,2-diacyl-sn-glycerol. It carries out the reaction N-hexadecanoyl-(4R)-hydroxysphinganine + a 1,2-diacyl-sn-glycero-3-phosphocholine = N-hexadecanoyl-(4R)-hydroxysphinganine-phosphocholine + a 1,2-diacyl-sn-glycerol. The enzyme catalyses an N-acylsphing-4-enine + a 1,2-diacyl-sn-glycero-3-phosphoethanolamine = an N-acylsphing-4-enine 1-phosphoethanolamine + a 1,2-diacyl-sn-glycerol. Its pathway is sphingolipid metabolism. Its activity is regulated as follows. Inhibited by bacterial PC-phospholipase C inhibitor D609. Major sphingomyelin synthase at the Golgi apparatus. Catalyzes the reversible transfer of phosphocholine moiety in sphingomyelin biosynthesis: in the forward reaction transfers phosphocholine head group of phosphatidylcholine (PC) on to ceramide (CER) to form ceramide phosphocholine (sphingomyelin, SM) and diacylglycerol (DAG) as by-product, and in the reverse reaction transfers phosphocholine from SM to DAG to form PC and CER. The direction of the reaction depends on the levels of CER and DAG in Golgi membranes. Converts the newly synthesized CER, that is transported from the endoplasmic reticulum to the trans-Golgi by the Cer transport protein (CERT), to SM. Can form a heteromeric complex with glucosylceramide synthase (GCS) increasing SMS activity and reducing glucosylceramide synthesis, a critical mechanism that controls the metabolic fate of CER in the Golgi. Does not use free phosphorylcholine or CDP-choline as donor. Can also transfer phosphoethanolamine head group of phosphatidylethanolamine (PE) on to CER to form ceramide phosphoethanolamine (CPE). Regulates receptor-mediated signal transduction via mitogenic DAG and proapoptotic CER, as well as via SM, a structural component of membrane rafts that serve as platforms for signal transduction and protein sorting. Plays a role in secretory transport via regulation of DAG pool at the Golgi apparatus and its downstream effects on PRKD1. The sequence is that of Phosphatidylcholine:ceramide cholinephosphotransferase 1 (SGMS1) from Homo sapiens (Human).